The sequence spans 430 residues: Asparagine--tRNA ligase (430 aa).

Belongs to the class-II aminoacyl-tRNA synthetase family. In terms of assembly, homodimer.

The protein resides in the cytoplasm. The enzyme catalyses tRNA(Asn) + L-asparagine + ATP = L-asparaginyl-tRNA(Asn) + AMP + diphosphate + H(+). This Staphylococcus aureus (strain MRSA252) protein is Asparagine--tRNA ligase.